Reading from the N-terminus, the 118-residue chain is Large ribosomal subunit protein eL18 (118 aa).

This sequence belongs to the eukaryotic ribosomal protein eL18 family.

This Nanoarchaeum equitans (strain Kin4-M) protein is Large ribosomal subunit protein eL18.